The chain runs to 101 residues: NADH-quinone oxidoreductase subunit K (101 aa).

The next 3 membrane-spanning stretches (helical) occupy residues 5–25 (LGQV…GVLL), 29–49 (LIMI…VLVG), and 62–82 (VALL…ALVV).

The protein belongs to the complex I subunit 4L family. In terms of assembly, NDH-1 is composed of 14 different subunits. Subunits NuoA, H, J, K, L, M, N constitute the membrane sector of the complex.

It is found in the cell inner membrane. The enzyme catalyses a quinone + NADH + 5 H(+)(in) = a quinol + NAD(+) + 4 H(+)(out). In terms of biological role, NDH-1 shuttles electrons from NADH, via FMN and iron-sulfur (Fe-S) centers, to quinones in the respiratory chain. The immediate electron acceptor for the enzyme in this species is believed to be ubiquinone. Couples the redox reaction to proton translocation (for every two electrons transferred, four hydrogen ions are translocated across the cytoplasmic membrane), and thus conserves the redox energy in a proton gradient. This chain is NADH-quinone oxidoreductase subunit K, found in Syntrophotalea carbinolica (strain DSM 2380 / NBRC 103641 / GraBd1) (Pelobacter carbinolicus).